The following is a 620-amino-acid chain: Arginine--tRNA ligase (620 aa).

The 'HIGH' region signature appears at 147–157 (ANPTGPIHIGG).

Belongs to the class-I aminoacyl-tRNA synthetase family. As to quaternary structure, monomer.

It is found in the cytoplasm. The catalysed reaction is tRNA(Arg) + L-arginine + ATP = L-arginyl-tRNA(Arg) + AMP + diphosphate. The protein is Arginine--tRNA ligase of Bifidobacterium longum subsp. infantis (strain ATCC 15697 / DSM 20088 / JCM 1222 / NCTC 11817 / S12).